A 223-amino-acid chain; its full sequence is Adapter protein MecA (223 aa).

Belongs to the MecA family. As to quaternary structure, homodimer.

Its function is as follows. Enables the recognition and targeting of unfolded and aggregated proteins to the ClpC protease or to other proteins involved in proteolysis. This is Adapter protein MecA from Limosilactobacillus reuteri (strain DSM 20016) (Lactobacillus reuteri).